We begin with the raw amino-acid sequence, 612 residues long: DNA mismatch repair protein MutL (612 aa).

This sequence belongs to the DNA mismatch repair MutL/HexB family.

This protein is involved in the repair of mismatches in DNA. It is required for dam-dependent methyl-directed DNA mismatch repair. May act as a 'molecular matchmaker', a protein that promotes the formation of a stable complex between two or more DNA-binding proteins in an ATP-dependent manner without itself being part of a final effector complex. This chain is DNA mismatch repair protein MutL, found in Afipia carboxidovorans (strain ATCC 49405 / DSM 1227 / KCTC 32145 / OM5) (Oligotropha carboxidovorans).